A 1025-amino-acid chain; its full sequence is RNA cytidine acetyltransferase (1025 aa).

ATP is bound at residue G287 to L296. K426 bears the N6-acetyllysine mark. Residue R470 coordinates ATP. The region spanning C558–T753 is the N-acetyltransferase domain. Residues I629 to V631 and Q636 to S642 contribute to the acetyl-CoA site. The segment at P702–K1025 is required for localization to the nucleolus and midbody. Phosphothreonine is present on T716. R725 provides a ligand contact to acetyl-CoA. 3 positions are modified to phosphoserine: S934, S984, and S987. The disordered stretch occupies residues S990–K1025. Basic and acidic residues predominate over residues E997–D1018.

Belongs to the RNA cytidine acetyltransferase family. NAT10 subfamily. In terms of assembly, part of the small subunit (SSU) processome, composed of more than 70 proteins and the RNA chaperone small nucleolar RNA (snoRNA) U3. Interacts with THUMPD1. Interacts with SUN1 (via N-terminus). Interacts with TERT. In terms of processing, acetylation at Lys-426 is required to activation of rRNA transcription. May be autoacetylated; however ability to autoacetylate in vivo requires additional evidences.

The protein localises to the nucleus. It localises to the nucleolus. Its subcellular location is the midbody. It catalyses the reaction a cytidine in 18S rRNA + acetyl-CoA + ATP + H2O = an N(4)-acetylcytidine in 18S rRNA + ADP + phosphate + CoA + H(+). The enzyme catalyses a cytidine in tRNA + acetyl-CoA + ATP + H2O = an N(4)-acetylcytidine in tRNA + ADP + phosphate + CoA + H(+). It carries out the reaction a cytidine in mRNA + acetyl-CoA + ATP + H2O = an N(4)-acetylcytidine in mRNA + ADP + phosphate + CoA + H(+). With respect to regulation, specifically inhibited by remodelin (4-[2-(2-cyclopentylidenehydrazinyl)-4-thiazolyl]-benzonitrile, monohydrobromide), a hydrobromide salt molecule. Remodelin can improve nuclear architecture, chromatin organization and fitness of cells from patients suffering from Hutchinson-Gilford progeria syndrome (HGPS); molecular mechanisms explaining the relation between NAT10 activity and nuclear architecture are however unclear. Functionally, RNA cytidine acetyltransferase that catalyzes the formation of N(4)-acetylcytidine (ac4C) modification on mRNAs, 18S rRNA and tRNAs. Catalyzes ac4C modification of a broad range of mRNAs, enhancing mRNA stability and translation. mRNA ac4C modification is frequently present within wobble cytidine sites and promotes translation efficiency. Mediates the formation of ac4C at position 1842 in 18S rRNA. May also catalyze the formation of ac4C at position 1337 in 18S rRNA. Required for early nucleolar cleavages of precursor rRNA at sites A0, A1 and A2 during 18S rRNA synthesis. Catalyzes the formation of ac4C in serine and leucine tRNAs. Requires the tRNA-binding adapter protein THUMPD1 for full tRNA acetyltransferase activity but not for 18S rRNA acetylation. In addition to RNA acetyltransferase activity, also able to acetylate lysine residues of proteins, such as histones, microtubules, p53/TP53 and MDM2, in vitro. The relevance of the protein lysine acetyltransferase activity is however unsure in vivo. Activates telomerase activity by stimulating the transcription of TERT, and may also regulate telomerase function by affecting the balance of telomerase subunit assembly, disassembly, and localization. Involved in the regulation of centrosome duplication by acetylating CENATAC during mitosis, promoting SASS6 proteasome degradation. Part of the small subunit (SSU) processome, first precursor of the small eukaryotic ribosomal subunit. During the assembly of the SSU processome in the nucleolus, many ribosome biogenesis factors, an RNA chaperone and ribosomal proteins associate with the nascent pre-rRNA and work in concert to generate RNA folding, modifications, rearrangements and cleavage as well as targeted degradation of pre-ribosomal RNA by the RNA exosome. The polypeptide is RNA cytidine acetyltransferase (Homo sapiens (Human)).